A 411-amino-acid polypeptide reads, in one-letter code: Peptide chain release factor subunit 1 (411 aa).

The protein belongs to the eukaryotic release factor 1 family. Heterodimer of two subunits, one of which binds GTP.

It localises to the cytoplasm. In terms of biological role, directs the termination of nascent peptide synthesis (translation) in response to the termination codons UAA, UAG and UGA. The polypeptide is Peptide chain release factor subunit 1 (Methanosphaera stadtmanae (strain ATCC 43021 / DSM 3091 / JCM 11832 / MCB-3)).